A 347-amino-acid polypeptide reads, in one-letter code: MSVMFDPDTAIYPFPPKPTPLSIDEKAYYREKIKRLLKERNAVMVAHYYTDPEIQQLAEETGGCISDSLEMARFGAKHPASTLLVAGVRFMGETAKILSPEKTILMPTLQAECSLDLGCPVEEFNAFCDAHPDRTVVVYANTSAAVKARADWVVTSSIAVELIDHLDSLGEKIIWAPDKHLGRYVQKQTGGDILCWQGACIVHDEFKTQALTRLQEEYPDAAILVHPESPQAIVDMADAVGSTSQLIAAAKTLPHQRLIVATDRGIFYKMQQAVPDKELLEAPTAGEGATCRSCAHCPWMAMNGLQAIAKALEQEGSNHEVHVEERLRERALVPLNRMLDFAATLRG.

Iminosuccinate-binding residues include histidine 47 and serine 68. Cysteine 113 contributes to the [4Fe-4S] cluster binding site. Iminosuccinate is bound by residues tyrosine 139 to asparagine 141 and serine 156. A [4Fe-4S] cluster-binding site is contributed by cysteine 200. Residues histidine 226–glutamate 228 and threonine 243 each bind iminosuccinate. Cysteine 297 provides a ligand contact to [4Fe-4S] cluster.

Belongs to the quinolinate synthase family. Type 1 subfamily. [4Fe-4S] cluster serves as cofactor.

The protein localises to the cytoplasm. It carries out the reaction iminosuccinate + dihydroxyacetone phosphate = quinolinate + phosphate + 2 H2O + H(+). The protein operates within cofactor biosynthesis; NAD(+) biosynthesis; quinolinate from iminoaspartate: step 1/1. Catalyzes the condensation of iminoaspartate with dihydroxyacetone phosphate to form quinolinate. The polypeptide is Quinolinate synthase (Escherichia coli O9:H4 (strain HS)).